Consider the following 131-residue polypeptide: L-ectoine synthase (131 aa).

Belongs to the ectoine synthase family.

The catalysed reaction is (2S)-4-acetamido-2-aminobutanoate = L-ectoine + H2O. Its pathway is amine and polyamine biosynthesis; ectoine biosynthesis; L-ectoine from L-aspartate 4-semialdehyde: step 3/3. Its function is as follows. Catalyzes the circularization of gamma-N-acetyl-alpha,gamma-diaminobutyric acid (ADABA) to ectoine (1,4,5,6-tetrahydro-2-methyl-4-pyrimidine carboxylic acid), which is an excellent osmoprotectant. This Nocardia farcinica (strain IFM 10152) protein is L-ectoine synthase.